Here is a 452-residue protein sequence, read N- to C-terminus: MREILHIQGGQCGNQIGSKFWEVICDEHGVDPTGRYKGTAAESDLQLERINVYFNEASGGRYVPRAVLMDLEPGTMDSIRSGPYGQIFRPDNLVFGQSGAGNNWAKGHYTEGAELIDAVLDVVRKEAENCDCLQGFQVCHSLGGGTGSGMGTLLISKVREEYPDRMMLTFSVFPSPKVSDTVVEPYNATLSVHQLVENADECMVLDNEALYDICFRTLKLTTPSFGDLNHLISATMSGVTCCLRFPGQLNSDLRKLAVNLIPLPRLHFFMVGFAPLTSRGSQQYISLTVPELTQQMWDAKNMMCAADPRHGRYLTASAMFRGKMSTKEVDEQMINVQNKNSSYFVEWIPNNVKSSVCDIPPTGLKMASTFVGNSTSIQEMFRRVSEQFTAMFRRKAFLHWYTGEGMDEMEFTEAESNMNDPVAEYQQYQDATADDEEEYDDEAADDHHQYES.

Glutamine 11, glutamate 72, serine 141, glycine 145, threonine 146, glycine 147, asparagine 207, and asparagine 229 together coordinate GTP. A Mg(2+)-binding site is contributed by glutamate 72. Residues 414–452 (AESNMNDPVAEYQQYQDATADDEEEYDDEAADDHHQYES) are disordered. The span at 432 to 444 (TADDEEEYDDEAA) shows a compositional bias: acidic residues.

Belongs to the tubulin family. In terms of assembly, dimer of alpha and beta chains. A typical microtubule is a hollow water-filled tube with an outer diameter of 25 nm and an inner diameter of 15 nM. Alpha-beta heterodimers associate head-to-tail to form protofilaments running lengthwise along the microtubule wall with the beta-tubulin subunit facing the microtubule plus end conferring a structural polarity. Microtubules usually have 13 protofilaments but different protofilament numbers can be found in some organisms and specialized cells. The cofactor is Mg(2+).

It localises to the cytoplasm. The protein localises to the cytoskeleton. Its function is as follows. Tubulin is the major constituent of microtubules, a cylinder consisting of laterally associated linear protofilaments composed of alpha- and beta-tubulin heterodimers. Microtubules grow by the addition of GTP-tubulin dimers to the microtubule end, where a stabilizing cap forms. Below the cap, tubulin dimers are in GDP-bound state, owing to GTPase activity of alpha-tubulin. The polypeptide is Tubulin beta-2 chain (TUBB2) (Solanum tuberosum (Potato)).